The chain runs to 297 residues: GTP cyclohydrolase FolE2 (297 aa).

It belongs to the GTP cyclohydrolase IV family.

It catalyses the reaction GTP + H2O = 7,8-dihydroneopterin 3'-triphosphate + formate + H(+). It participates in cofactor biosynthesis; 7,8-dihydroneopterin triphosphate biosynthesis; 7,8-dihydroneopterin triphosphate from GTP: step 1/1. Converts GTP to 7,8-dihydroneopterin triphosphate. The sequence is that of GTP cyclohydrolase FolE2 from Pseudomonas fluorescens (strain ATCC BAA-477 / NRRL B-23932 / Pf-5).